Consider the following 457-residue polypeptide: MALWGGRFTQAADKRFKDFNDSLRFDYRLAEQDIQGSIGWSKALVKVNVLTIEEQHQLEQALNELLVEVRSNPQAILQDDAEDIHSWVESKLIDKVGNLGKKLHTGRSRNDQVAVDIKLWCKQRVVELQESVRNLQRHLVQTAENTQQAVMPGYTHLQRAQPITFAHWCMAYVEMFDRDYSRLTDAYNRMNTCPLGSGALAGTAYAVDRDSLAHDLGFAFATRNSLDSVSDRDHIVELLSIASLSMAHLSRFAEDMIIFNSGEANFVELSDRVTSGSSLMPQKKNPDACELIRGKTGRVIGSLTSMLITLKGLPLAYNKDMQEDKEGIFDALDTWQNCVDMATFVLDELKVNVERTREAALKGYSNATELADYLVSKGVPFRDSHHIVGETVVYAIEKGKGLEDLTIPEFRQFSEVVGDDVYEILSLQSCLDKRCAKGGVSPLRVAEAIAEAKTRFA.

Belongs to the lyase 1 family. Argininosuccinate lyase subfamily.

The protein resides in the cytoplasm. The catalysed reaction is 2-(N(omega)-L-arginino)succinate = fumarate + L-arginine. Its pathway is amino-acid biosynthesis; L-arginine biosynthesis; L-arginine from L-ornithine and carbamoyl phosphate: step 3/3. This chain is Argininosuccinate lyase, found in Haemophilus influenzae (strain PittEE).